Consider the following 312-residue polypeptide: MEIIFYHPTFNAAWWVNALEKALPHARVREWKVGDNNPADYALVWQPPVEMLAGRRLKAVFALGAGVDAILSKLNAHPEMLDASIPLFRLEDTGMGLQMQEYAVSQVLHWFRRFDDYQALKNQALWKPLPEYTREEFSVGIMGAGVLGAKVAESLQAWGFPLRCWSRSRKSWPGVESYVGREELRAFLNQTRVLINLLPNTAQTVGIINSELLDQLPDGAYVLNLARGVHVQEADLLAALDSGKLKGAMLDVFSQEPLPQESPLWRHPRVAMTPHIAAVTRPAEAIDYISRTITQLEKGEPVTGQVDRARGY.

Arg-227 is a catalytic residue. His-275 functions as the Proton donor in the catalytic mechanism.

Belongs to the D-isomer specific 2-hydroxyacid dehydrogenase family. GhrA subfamily.

It is found in the cytoplasm. It catalyses the reaction glycolate + NADP(+) = glyoxylate + NADPH + H(+). It carries out the reaction (R)-glycerate + NAD(+) = 3-hydroxypyruvate + NADH + H(+). The enzyme catalyses (R)-glycerate + NADP(+) = 3-hydroxypyruvate + NADPH + H(+). Functionally, catalyzes the NADPH-dependent reduction of glyoxylate and hydroxypyruvate into glycolate and glycerate, respectively. This Salmonella heidelberg (strain SL476) protein is Glyoxylate/hydroxypyruvate reductase A.